The primary structure comprises 279 residues: MVDSDSARLPYFNASPAEVRRLCRAGESGPVTAGMAAGYIQANIVMLPASLADAFHEFCLRNPKPCPLVGMSRPGDYRLPSLGADLDLRTDLPLYRVWRDGNMVAETGDIRDQWRDDLVTFALGCSFSFENALTACDVPMRHLQLGRGVPVYRTNIACTPVGPFAGPVVVSMRPFRSHHAIRAVQISSLIPLAHGAPIQIGFPEEIGIADIDSPDYGDPTEVADDELPVFWACGVTPQAVLAASKPEFAITHAPGAMLVTDMPIEGYEDLVASHRGRII.

The protein belongs to the D-glutamate cyclase family.

This is Putative hydro-lyase GDI0188/Gdia_2258 from Gluconacetobacter diazotrophicus (strain ATCC 49037 / DSM 5601 / CCUG 37298 / CIP 103539 / LMG 7603 / PAl5).